Here is a 391-residue protein sequence, read N- to C-terminus: ATP-sensitive inward rectifier potassium channel 1 (391 aa).

Residues Met-1–Trp-77 are Cytoplasmic-facing. Ser-44 is subject to Phosphoserine; by SGK1. Residues Arg-78–Val-102 traverse the membrane as a helical segment. Topologically, residues Ala-103 to Gly-127 are extracellular. N-linked (GlcNAc...) asparagine glycosylation occurs at Asn-117. Residues Met-128–Gln-139 constitute an intramembrane region (helical; Pore-forming). The pore-forming intramembrane region spans Val-140 to Phe-146. A Selectivity filter motif is present at residues Thr-141 to Phe-146. Topologically, residues Arg-147–Thr-155 are extracellular. A helical transmembrane segment spans residues Ala-156–Ala-177. Residues Ile-178 to Met-391 are Cytoplasmic-facing. Positions Ala-180–Leu-207 are polyphosphoinositide (PIP2)-binding. Gly-223 to Leu-230 contacts ATP.

This sequence belongs to the inward rectifier-type potassium channel (TC 1.A.2.1) family. KCNJ1 subfamily. In terms of assembly, interacts with SGK1 and SLC9A3R2/NHERF2. Post-translationally, phosphorylation at Ser-44 by SGK1 is necessary for its expression at the cell membrane. In terms of tissue distribution, mainly in kidney (renal cortex, medulla and papilla). Kidney.

The protein localises to the cell membrane. It catalyses the reaction K(+)(in) = K(+)(out). With respect to regulation, inhibited by WNK3. Activated by phosphatidylinositol 4,5 biphosphate (PtdIns(4,5)P2). Its function is as follows. Inward rectifier potassium channels are characterized by a greater tendency to allow potassium to flow into the cell rather than out of it. Their voltage dependence is regulated by the concentration of extracellular potassium; as external potassium is raised, the voltage range of the channel opening shifts to more positive voltages. The inward rectification is mainly due to the blockage of outward current by internal magnesium. This channel is activated by internal ATP and can be blocked by external barium. In the kidney, probably plays a major role in potassium homeostasis. Functionally, inward rectifier potassium channels are characterized by a greater tendency to allow potassium to flow into the cell rather than out of it. Their voltage dependence is regulated by the concentration of extracellular potassium; as external potassium is raised, the voltage range of the channel opening shifts to more positive voltages. The protein is ATP-sensitive inward rectifier potassium channel 1 (Kcnj1) of Rattus norvegicus (Rat).